The primary structure comprises 221 residues: Hypoxanthine-guanine phosphoribosyltransferase (221 aa).

S2 carries the post-translational modification N-acetylserine. GMP is bound by residues K85, 110–118, K159, and 188–194; these read DEVDDTRTT and WYAYPWE. Residue D114 is the Proton acceptor of the active site.

The protein belongs to the purine/pyrimidine phosphoribosyltransferase family. As to quaternary structure, dimer. Mg(2+) serves as cofactor.

The protein localises to the cytoplasm. The protein resides in the nucleus. The enzyme catalyses IMP + diphosphate = hypoxanthine + 5-phospho-alpha-D-ribose 1-diphosphate. It carries out the reaction GMP + diphosphate = guanine + 5-phospho-alpha-D-ribose 1-diphosphate. It functions in the pathway purine metabolism; IMP biosynthesis via salvage pathway; IMP from hypoxanthine: step 1/1. Its activity is regulated as follows. Subject to feedback inhibition by GMP. In terms of biological role, converts guanine to guanosine monophosphate, and hypoxanthine to inosine monophosphate. Transfers the 5-phosphoribosyl group from 5-phosphoribosylpyrophosphate onto the purine. Plays a central role in the generation of purine nucleotides through the purine salvage pathway. This is Hypoxanthine-guanine phosphoribosyltransferase (HPT1) from Saccharomyces cerevisiae (strain ATCC 204508 / S288c) (Baker's yeast).